The chain runs to 244 residues: Ribonuclease 3 2 (244 aa).

The 126-residue stretch at leucine 11–glycine 136 folds into the RNase III domain. Position 50 (glutamate 50) interacts with Mg(2+). Residue aspartate 54 is part of the active site. Mg(2+)-binding residues include aspartate 122 and glutamate 125. Glutamate 125 is an active-site residue. The DRBM domain occupies asparagine 164–alanine 234.

The protein belongs to the ribonuclease III family. As to quaternary structure, homodimer. Mg(2+) is required as a cofactor.

The protein resides in the cytoplasm. The catalysed reaction is Endonucleolytic cleavage to 5'-phosphomonoester.. Its function is as follows. Digests double-stranded RNA. Involved in the processing of primary rRNA transcript to yield the immediate precursors to the large and small rRNAs (23S and 16S). Processes some mRNAs, and tRNAs when they are encoded in the rRNA operon. Processes pre-crRNA and tracrRNA of type II CRISPR loci if present in the organism. The polypeptide is Ribonuclease 3 2 (Synechocystis sp. (strain ATCC 27184 / PCC 6803 / Kazusa)).